The primary structure comprises 274 residues: tRNA-cytidine(32) 2-sulfurtransferase (274 aa).

A PP-loop motif motif is present at residues 40-45 (SGGKDS). [4Fe-4S] cluster contacts are provided by Cys115, Cys118, and Cys206.

It belongs to the TtcA family. Homodimer. The cofactor is Mg(2+). [4Fe-4S] cluster serves as cofactor.

The protein resides in the cytoplasm. It carries out the reaction cytidine(32) in tRNA + S-sulfanyl-L-cysteinyl-[cysteine desulfurase] + AH2 + ATP = 2-thiocytidine(32) in tRNA + L-cysteinyl-[cysteine desulfurase] + A + AMP + diphosphate + H(+). It functions in the pathway tRNA modification. Functionally, catalyzes the ATP-dependent 2-thiolation of cytidine in position 32 of tRNA, to form 2-thiocytidine (s(2)C32). The sulfur atoms are provided by the cysteine/cysteine desulfurase (IscS) system. The protein is tRNA-cytidine(32) 2-sulfurtransferase of Pseudomonas putida (strain ATCC 700007 / DSM 6899 / JCM 31910 / BCRC 17059 / LMG 24140 / F1).